A 557-amino-acid polypeptide reads, in one-letter code: Urease subunit alpha (557 aa).

The 428-residue stretch at 130 to 557 (GFIDTHIHWV…LPLTQLYFIY (428 aa)) folds into the Urease domain. Residues His-135, His-137, and Lys-217 each coordinate Ni(2+). Lys-217 carries the post-translational modification N6-carboxylysine. His-219 serves as a coordination point for substrate. 2 residues coordinate Ni(2+): His-246 and His-272. His-320 (proton donor) is an active-site residue. Asp-360 contacts Ni(2+).

The protein belongs to the metallo-dependent hydrolases superfamily. Urease alpha subunit family. Heterohexamer of 3 UreC (alpha) and 3 UreAB (gamma/beta) subunits. Requires Ni cation as cofactor. Carboxylation allows a single lysine to coordinate two nickel ions.

The protein localises to the cytoplasm. It carries out the reaction urea + 2 H2O + H(+) = hydrogencarbonate + 2 NH4(+). The protein operates within nitrogen metabolism; urea degradation; CO(2) and NH(3) from urea (urease route): step 1/1. The polypeptide is Urease subunit alpha (Sulfurisphaera tokodaii (strain DSM 16993 / JCM 10545 / NBRC 100140 / 7) (Sulfolobus tokodaii)).